A 133-amino-acid chain; its full sequence is Small ribosomal subunit protein bS6 (133 aa).

The protein belongs to the bacterial ribosomal protein bS6 family.

Its function is as follows. Binds together with bS18 to 16S ribosomal RNA. This chain is Small ribosomal subunit protein bS6, found in Borrelia turicatae (strain 91E135).